Here is a 241-residue protein sequence, read N- to C-terminus: Uridylate kinase (241 aa).

Residue 14–17 participates in ATP binding; that stretch reads KLSG. Position 56 (glycine 56) interacts with UMP. Positions 57 and 61 each coordinate ATP. UMP-binding positions include aspartate 77 and 138-145; that span reads TGNPFFTT. 3 residues coordinate ATP: threonine 165, tyrosine 171, and aspartate 174.

The protein belongs to the UMP kinase family. As to quaternary structure, homohexamer.

It localises to the cytoplasm. The catalysed reaction is UMP + ATP = UDP + ADP. It functions in the pathway pyrimidine metabolism; CTP biosynthesis via de novo pathway; UDP from UMP (UMPK route): step 1/1. Its activity is regulated as follows. Inhibited by UTP. Catalyzes the reversible phosphorylation of UMP to UDP. This Psychrobacter cryohalolentis (strain ATCC BAA-1226 / DSM 17306 / VKM B-2378 / K5) protein is Uridylate kinase.